The sequence spans 541 residues: Formimidoyltransferase-cyclodeaminase (541 aa).

Residues 1 to 181 (MAKLVECVPN…GATVTGARTF (181 aa)) are formiminotransferase N-subdomain. The For formimidoyltransferase activity role is filled by histidine 82. A folate-binding site is contributed by 163-172 (GPPAFVPQWG). The tract at residues 182–326 (LIAYNINLLC…PRERIIEYLV (145 aa)) is formiminotransferase C-subdomain. The tract at residues 327–334 (QAGQEDKG) is linker. The segment at 335–541 (LVTKPLGAFV…VLALLEKREA (207 aa)) is cyclodeaminase/cyclohydrolase. The For cyclodeaminase activity role is filled by aspartate 412.

This sequence in the C-terminal section; belongs to the cyclodeaminase/cyclohydrolase family. It in the N-terminal section; belongs to the formiminotransferase family. Homooctamer, including four polyglutamate binding sites. The subunits are arranged as a tetramer of dimers, and form a planar ring-shaped structure.

It localises to the cytoplasm. It is found in the cytosol. Its subcellular location is the golgi apparatus. The protein resides in the cytoskeleton. The protein localises to the microtubule organizing center. It localises to the centrosome. It is found in the centriole. It catalyses the reaction 5-formimidoyltetrahydrofolate + L-glutamate = N-formimidoyl-L-glutamate + (6S)-5,6,7,8-tetrahydrofolate. It carries out the reaction 5-formimidoyltetrahydrofolate + 2 H(+) = (6R)-5,10-methenyltetrahydrofolate + NH4(+). The protein operates within amino-acid degradation; L-histidine degradation into L-glutamate; L-glutamate from N-formimidoyl-L-glutamate (transferase route): step 1/1. Folate-dependent enzyme, that displays both transferase and deaminase activity. Serves to channel one-carbon units from formiminoglutamate to the folate pool. Its function is as follows. Binds and promotes bundling of vimentin filaments originating from the Golgi. This Gallus gallus (Chicken) protein is Formimidoyltransferase-cyclodeaminase (FTCD).